The sequence spans 285 residues: MNMFLLLMSLYLLGSARGTSGQSDESSGSIDHQTSVQQLSGEFFSLENPSDAEALYETASGLNTLSEHGSSEHGSREHTVAEHTPGEHAESEHASGEPAATGHAEGEHTVGEQPSGEQPSGEHLSGEQSLGEHASGEQPSDEQLSGEHASGEQPSGEHASGEQPSGEQPSGEHASGEQSLGEHALSEKPSGEQPSGAPISSISTGTILNCYTCAYMNDQGRCLRGEGTCITQNSQQCMLKKIFEGGKLQFMVQGCENMCPSMNLFSHGTRMQIICCRNQSFCNKI.

A signal peptide spans 1–21; the sequence is MNMFLLLMSLYLLGSARGTSG. A disordered region spans residues 64–200; sequence TLSEHGSSEH…GEQPSGAPIS (137 aa). 19 tandem repeats follow at residues 66–70, 71–75, 85–89, 91–95, 110–114, 115–119, 120–124, 125–129, 130–134, 135–139, 145–149, 150–154, 155–159, 160–164, 165–169, 170–174, 175–179, 180–184, and 190–194. Residues 66-95 form a 3 X 5 AA repeats of S-E-H-[GA]-A region; it reads SEHGSSEHGSREHTVAEHTPGEHAESEHAS. Over residues 69–95 the composition is skewed to basic and acidic residues; the sequence is GSSEHGSREHTVAEHTPGEHAESEHAS. The interval 85 to 184 is 7 X 5 AA repeats of S-G-E-H-[AL]; that stretch reads PGEHAESEHA…SGEQSLGEHA (100 aa). The tract at residues 110–194 is 9 X 5 AA repeats of [SV]-G-E-Q-[PSA]; it reads VGEQPSGEQP…LSEKPSGEQP (85 aa). The N-linked (GlcNAc...) asparagine glycan is linked to N278.

As to expression, testis.

The protein resides in the cytoplasmic vesicle. It is found in the secretory vesicle. The protein localises to the acrosome. The sequence is that of Acrosomal protein SP-10 (ACRV1) from Papio hamadryas (Hamadryas baboon).